We begin with the raw amino-acid sequence, 74 residues long: UPF0352 protein PM1884 (74 aa).

This sequence belongs to the UPF0352 family.

The chain is UPF0352 protein PM1884 from Pasteurella multocida (strain Pm70).